A 186-amino-acid polypeptide reads, in one-letter code: Elongation factor P (186 aa).

Belongs to the elongation factor P family.

The protein resides in the cytoplasm. Its pathway is protein biosynthesis; polypeptide chain elongation. In terms of biological role, involved in peptide bond synthesis. Stimulates efficient translation and peptide-bond synthesis on native or reconstituted 70S ribosomes in vitro. Probably functions indirectly by altering the affinity of the ribosome for aminoacyl-tRNA, thus increasing their reactivity as acceptors for peptidyl transferase. The polypeptide is Elongation factor P (Prochlorococcus marinus (strain MIT 9301)).